Here is a 186-residue protein sequence, read N- to C-terminus: MASTLSTITLRSPSPSTATSTHASIPFPKKTLEFPIRTPKLQNRRATFLRPLAAVEAPEKVVQLGDEISNLTLADAQKLVEYLQDKLGVTAASFAPAAVVAAPGAAAEAPAVVEEKTEFDVVIDEVPSNARIATIKAVRALTSLALKEAKELIEGLPKKFKEGVSKDEAEDAKKQLEEAGAKVSIA.

Residues 1–11 (MASTLSTITLR) are compositionally biased toward polar residues. The tract at residues 1-24 (MASTLSTITLRSPSPSTATSTHAS) is disordered. The N-terminal 53 residues, 1–53 (MASTLSTITLRSPSPSTATSTHASIPFPKKTLEFPIRTPKLQNRRATFLRPLA), are a transit peptide targeting the chloroplast. Positions 12-24 (SPSPSTATSTHAS) are enriched in low complexity.

The protein belongs to the bacterial ribosomal protein bL12 family.

It localises to the plastid. The protein localises to the chloroplast. The chain is Large ribosomal subunit protein bL12c from Nicotiana sylvestris (Wood tobacco).